We begin with the raw amino-acid sequence, 237 residues long: Putative N-acetylmannosamine-6-phosphate 2-epimerase (237 aa).

Belongs to the NanE family.

It catalyses the reaction an N-acyl-D-glucosamine 6-phosphate = an N-acyl-D-mannosamine 6-phosphate. The protein operates within amino-sugar metabolism; N-acetylneuraminate degradation; D-fructose 6-phosphate from N-acetylneuraminate: step 3/5. Functionally, converts N-acetylmannosamine-6-phosphate (ManNAc-6-P) to N-acetylglucosamine-6-phosphate (GlcNAc-6-P). The sequence is that of Putative N-acetylmannosamine-6-phosphate 2-epimerase from Caldanaerobacter subterraneus subsp. tengcongensis (strain DSM 15242 / JCM 11007 / NBRC 100824 / MB4) (Thermoanaerobacter tengcongensis).